Here is a 223-residue protein sequence, read N- to C-terminus: Histone H1.5 (223 aa).

Over residues Met-1–Pro-14 the composition is skewed to low complexity. Residues Met-1–Gly-56 are disordered. Ser-2 is subject to N-acetylserine. Ser-2 carries the phosphoserine modification. Lys-17 carries the post-translational modification N6-acetyllysine. Ser-18 carries the phosphoserine modification. Positions Ala-20–Ala-35 are enriched in basic residues. Residue Lys-27 is modified to N6-methyllysine. At Lys-34 the chain carries N6-(beta-hydroxybutyryl)lysine; alternate. At Lys-34 the chain carries N6-succinyllysine; alternate. Thr-36 is modified (phosphothreonine). Residues Thr-36–Lys-109 enclose the H15 domain. N6-acetyllysine is present on Lys-46. Lys-52 bears the N6-(beta-hydroxybutyryl)lysine mark. Arg-54 bears the Citrulline mark. The residue at position 64 (Lys-64) is an N6-(beta-hydroxybutyryl)lysine. The residue at position 75 (Lys-75) is an N6-acetyllysine. An N6-(beta-hydroxybutyryl)lysine mark is found at Lys-85, Lys-90, and Lys-106. The tract at residues Gly-91–Lys-223 is disordered. Basic residues predominate over residues Lys-119 to Lys-130. A phosphothreonine mark is found at Thr-135 and Thr-152. Residues Lys-137–Lys-158 are compositionally biased toward basic residues. The residue at position 165 (Lys-165) is an N6-acetyllysine. Positions Lys-166–Ala-184 are enriched in basic residues. Residues Ser-170 and Ser-186 each carry the phosphoserine modification. The segment covering Lys-191–Lys-223 has biased composition (basic residues).

Belongs to the histone H1/H5 family. In terms of assembly, interacts with MSX1. Post-translationally, H1 histones are progressively phosphorylated during the cell cycle, becoming maximally phosphorylated during late G2 phase and M phase, and being dephosphorylated sharply thereafter. Citrullination at Arg-54 (H1R54ci) by PADI4 takes place within the DNA-binding site of H1 and results in its displacement from chromatin and global chromatin decondensation, thereby promoting pluripotency and stem cell maintenance. In terms of processing, hydroxybutyrylation of histones is induced by starvation.

It localises to the nucleus. Its subcellular location is the chromosome. In terms of biological role, histone H1 protein binds to linker DNA between nucleosomes forming the macromolecular structure known as the chromatin fiber. Histones H1 are necessary for the condensation of nucleosome chains into higher-order structured fibers. Also acts as a regulator of individual gene transcription through chromatin remodeling, nucleosome spacing and DNA methylation. The sequence is that of Histone H1.5 (H1-5) from Mus musculus (Mouse).